We begin with the raw amino-acid sequence, 170 residues long: Inner membrane protein p22 (170 aa).

The Intravirion segment spans residues 1–3 (MST). A helical membrane pass occupies residues 4-24 (LLIALIALIVLLIIILVVFLY). Residues 25 to 170 (YKKQQPPKKV…LYLPRNHKYA (146 aa)) lie on the Virion surface side of the membrane.

It belongs to the asfivirus inner membrane protein p22 family.

The protein resides in the virion membrane. It is found in the host cell membrane. The chain is Inner membrane protein p22 from Ornithodoros (relapsing fever ticks).